Consider the following 477-residue polypeptide: Probable glycine dehydrogenase (decarboxylating) subunit 2 (477 aa).

Lys-264 bears the N6-(pyridoxal phosphate)lysine mark.

It belongs to the GcvP family. C-terminal subunit subfamily. The glycine cleavage system is composed of four proteins: P, T, L and H. In this organism, the P 'protein' is a heterodimer of two subunits. The cofactor is pyridoxal 5'-phosphate.

It catalyses the reaction N(6)-[(R)-lipoyl]-L-lysyl-[glycine-cleavage complex H protein] + glycine + H(+) = N(6)-[(R)-S(8)-aminomethyldihydrolipoyl]-L-lysyl-[glycine-cleavage complex H protein] + CO2. Functionally, the glycine cleavage system catalyzes the degradation of glycine. The P protein binds the alpha-amino group of glycine through its pyridoxal phosphate cofactor; CO(2) is released and the remaining methylamine moiety is then transferred to the lipoamide cofactor of the H protein. This chain is Probable glycine dehydrogenase (decarboxylating) subunit 2, found in Fervidobacterium nodosum (strain ATCC 35602 / DSM 5306 / Rt17-B1).